Here is a 283-residue protein sequence, read N- to C-terminus: Phytanoyl-CoA dioxygenase (283 aa).

2-oxoglutarate-binding positions include K99, M138, 153 to 155 (HQD), and W170. Residues H153 and D155 each coordinate Fe cation. Fe cation is bound at residue H238. S240 and R249 together coordinate 2-oxoglutarate.

It belongs to the PhyH family. Requires Fe cation as cofactor. The cofactor is L-ascorbate.

It carries out the reaction phytanoyl-CoA + 2-oxoglutarate + O2 = 2-hydroxyphytanoyl-CoA + succinate + CO2. It participates in lipid metabolism; fatty acid metabolism. Its function is as follows. Converts phytanoyl-CoA to 2-hydroxyphytanoyl-CoA. The chain is Phytanoyl-CoA dioxygenase from Arabidopsis thaliana (Mouse-ear cress).